A 66-amino-acid polypeptide reads, in one-letter code: Phylloseptin-S3 (66 aa).

A signal peptide spans 1 to 22 (MAFLKKSLFLVLFLGLVSLSIC). The propeptide occupies 23–46 (EEEKRETEEEEHDQEEDDKSEEKR). Positions 25–44 (EKRETEEEEHDQEEDDKSEE) are disordered. A compositionally biased stretch (acidic residues) spans 30–41 (EEEEHDQEEDDK). The residue at position 65 (F65) is a Phenylalanine amide.

This sequence belongs to the frog skin active peptide (FSAP) family. Phylloseptin subfamily. Expressed by the skin glands.

The protein localises to the secreted. It is found in the target cell membrane. Functionally, antimicrobial peptide with activity against the Gram-positive S.pyogenes (MIC=12.5 uM), but not against all other bacteria tested (both Gram-positive and Gram-negative). Does not show activity against fungi, and against Leishmania species. This chain is Phylloseptin-S3, found in Phyllomedusa sauvagei (Sauvage's leaf frog).